The sequence spans 166 residues: Cyclin-dependent kinase 4 inhibitor D (166 aa).

Position 1 is an N-acetylmethionine (M1). 4 ANK repeats span residues 41–69 (FGKT…SPNV), 73–102 (SGTS…DVNA), 106–135 (TGSL…LHHR), and 138–165 (SGLT…MMIP).

This sequence belongs to the CDKN2 cyclin-dependent kinase inhibitor family. In terms of assembly, interacts with CDK6.

The protein localises to the nucleus. Its subcellular location is the cytoplasm. Functionally, interacts strongly with CDK4 and CDK6 and inhibits them. This Mus musculus (Mouse) protein is Cyclin-dependent kinase 4 inhibitor D (Cdkn2d).